Consider the following 308-residue polypeptide: Methionyl-tRNA formyltransferase (308 aa).

110 to 113 contacts (6S)-5,6,7,8-tetrahydrofolate; it reads SLLP.

Belongs to the Fmt family.

The catalysed reaction is L-methionyl-tRNA(fMet) + (6R)-10-formyltetrahydrofolate = N-formyl-L-methionyl-tRNA(fMet) + (6S)-5,6,7,8-tetrahydrofolate + H(+). Its function is as follows. Attaches a formyl group to the free amino group of methionyl-tRNA(fMet). The formyl group appears to play a dual role in the initiator identity of N-formylmethionyl-tRNA by promoting its recognition by IF2 and preventing the misappropriation of this tRNA by the elongation apparatus. In Neisseria meningitidis serogroup C / serotype 2a (strain ATCC 700532 / DSM 15464 / FAM18), this protein is Methionyl-tRNA formyltransferase.